Here is a 281-residue protein sequence, read N- to C-terminus: Ribosomal RNA small subunit methyltransferase A (281 aa).

Positions 24, 26, 51, 72, 96, and 123 each coordinate S-adenosyl-L-methionine.

The protein belongs to the class I-like SAM-binding methyltransferase superfamily. rRNA adenine N(6)-methyltransferase family. RsmA subfamily.

Its subcellular location is the cytoplasm. It carries out the reaction adenosine(1518)/adenosine(1519) in 16S rRNA + 4 S-adenosyl-L-methionine = N(6)-dimethyladenosine(1518)/N(6)-dimethyladenosine(1519) in 16S rRNA + 4 S-adenosyl-L-homocysteine + 4 H(+). Its function is as follows. Specifically dimethylates two adjacent adenosines (A1518 and A1519) in the loop of a conserved hairpin near the 3'-end of 16S rRNA in the 30S particle. May play a critical role in biogenesis of 30S subunits. The polypeptide is Ribosomal RNA small subunit methyltransferase A (Ureaplasma urealyticum serovar 10 (strain ATCC 33699 / Western)).